The chain runs to 264 residues: Acyl-[acyl-carrier-protein]--UDP-N-acetylglucosamine O-acyltransferase (264 aa).

The protein belongs to the transferase hexapeptide repeat family. LpxA subfamily. In terms of assembly, homotrimer.

The protein resides in the cytoplasm. It carries out the reaction a (3R)-hydroxyacyl-[ACP] + UDP-N-acetyl-alpha-D-glucosamine = a UDP-3-O-[(3R)-3-hydroxyacyl]-N-acetyl-alpha-D-glucosamine + holo-[ACP]. Its pathway is glycolipid biosynthesis; lipid IV(A) biosynthesis; lipid IV(A) from (3R)-3-hydroxytetradecanoyl-[acyl-carrier-protein] and UDP-N-acetyl-alpha-D-glucosamine: step 1/6. Involved in the biosynthesis of lipid A, a phosphorylated glycolipid that anchors the lipopolysaccharide to the outer membrane of the cell. The chain is Acyl-[acyl-carrier-protein]--UDP-N-acetylglucosamine O-acyltransferase from Rickettsia prowazekii (strain Madrid E).